A 391-amino-acid polypeptide reads, in one-letter code: Succinate--CoA ligase [ADP-forming] subunit beta (391 aa).

In terms of domain architecture, ATP-grasp spans 9-246 (KHLFADYDIP…ITQEDEAEVQ (238 aa)). ATP-binding positions include K46, 53 to 55 (GRG), E99, L102, and E107. Mg(2+) is bound by residues N199 and D213. Substrate is bound by residues N266 and 323 to 325 (GIV).

This sequence belongs to the succinate/malate CoA ligase beta subunit family. In terms of assembly, heterotetramer of two alpha and two beta subunits. Mg(2+) serves as cofactor.

The catalysed reaction is succinate + ATP + CoA = succinyl-CoA + ADP + phosphate. It carries out the reaction GTP + succinate + CoA = succinyl-CoA + GDP + phosphate. It participates in carbohydrate metabolism; tricarboxylic acid cycle; succinate from succinyl-CoA (ligase route): step 1/1. Its function is as follows. Succinyl-CoA synthetase functions in the citric acid cycle (TCA), coupling the hydrolysis of succinyl-CoA to the synthesis of either ATP or GTP and thus represents the only step of substrate-level phosphorylation in the TCA. The beta subunit provides nucleotide specificity of the enzyme and binds the substrate succinate, while the binding sites for coenzyme A and phosphate are found in the alpha subunit. The polypeptide is Succinate--CoA ligase [ADP-forming] subunit beta (Alkalilimnicola ehrlichii (strain ATCC BAA-1101 / DSM 17681 / MLHE-1)).